Consider the following 919-residue polypeptide: Alanine--tRNA ligase (919 aa).

4 residues coordinate Zn(2+): His565, His569, Cys667, and His671.

This sequence belongs to the class-II aminoacyl-tRNA synthetase family. Zn(2+) is required as a cofactor.

The protein localises to the cytoplasm. It carries out the reaction tRNA(Ala) + L-alanine + ATP = L-alanyl-tRNA(Ala) + AMP + diphosphate. In terms of biological role, catalyzes the attachment of alanine to tRNA(Ala) in a two-step reaction: alanine is first activated by ATP to form Ala-AMP and then transferred to the acceptor end of tRNA(Ala). Also edits incorrectly charged Ser-tRNA(Ala) and Gly-tRNA(Ala) via its editing domain. The polypeptide is Alanine--tRNA ligase (Leptospira biflexa serovar Patoc (strain Patoc 1 / Ames)).